The sequence spans 352 residues: Phosphoribosylformylglycinamidine cyclo-ligase (352 aa).

This sequence belongs to the AIR synthase family.

Its subcellular location is the cytoplasm. The enzyme catalyses 2-formamido-N(1)-(5-O-phospho-beta-D-ribosyl)acetamidine + ATP = 5-amino-1-(5-phospho-beta-D-ribosyl)imidazole + ADP + phosphate + H(+). It participates in purine metabolism; IMP biosynthesis via de novo pathway; 5-amino-1-(5-phospho-D-ribosyl)imidazole from N(2)-formyl-N(1)-(5-phospho-D-ribosyl)glycinamide: step 2/2. In Ectopseudomonas mendocina (strain ymp) (Pseudomonas mendocina), this protein is Phosphoribosylformylglycinamidine cyclo-ligase.